The following is a 533-amino-acid chain: CEP295 N-terminal-like protein (533 aa).

Disordered regions lie at residues 1 to 40 (MQRDTERAAQLSPSSEDEALVLRQKPLEMPAQEEDSTTLQ), 84 to 176 (RSMG…RVTR), 286 to 333 (LKAD…ETTE), and 370 to 399 (AGTSREQDDLLSLSPESGQEPPKSPLLEDE). Residues 40 to 72 (QQWKARQLQRLAEELKAEWQEARLQQVRQAERL) adopt a coiled-coil conformation. Positions 107-126 (KERNRAAFREERGRREEHPR) are enriched in basic and acidic residues. A coiled-coil region spans residues 416-531 (MALRQKQKAE…ARKRLQEFQK (116 aa)).

As to expression, expressed in mature spermatozoa (at protein level). Detected in retina, lung and kidney. In brain, highly expressed in brain-stem, cerebral cortex and thalamus with lesser expression in cerebellum and hippocampus.

The protein resides in the cell projection. It is found in the cilium. This chain is CEP295 N-terminal-like protein, found in Mus musculus (Mouse).